We begin with the raw amino-acid sequence, 450 residues long: Glucose-6-phosphate isomerase (450 aa).

E290 serves as the catalytic Proton donor. Active-site residues include H311 and K425.

Belongs to the GPI family.

Its subcellular location is the cytoplasm. It catalyses the reaction alpha-D-glucose 6-phosphate = beta-D-fructose 6-phosphate. The protein operates within carbohydrate biosynthesis; gluconeogenesis. It functions in the pathway carbohydrate degradation; glycolysis; D-glyceraldehyde 3-phosphate and glycerone phosphate from D-glucose: step 2/4. Its function is as follows. Catalyzes the reversible isomerization of glucose-6-phosphate to fructose-6-phosphate. The protein is Glucose-6-phosphate isomerase of Lactiplantibacillus plantarum (strain ATCC BAA-793 / NCIMB 8826 / WCFS1) (Lactobacillus plantarum).